The following is a 538-amino-acid chain: Putative cysteine ligase BshC (538 aa).

Residues 460–484 adopt a coiled-coil conformation; that stretch reads KINEQIELLERMLKRNVEKKHEVEL.

It belongs to the BshC family.

In terms of biological role, involved in bacillithiol (BSH) biosynthesis. May catalyze the last step of the pathway, the addition of cysteine to glucosamine malate (GlcN-Mal) to generate BSH. The protein is Putative cysteine ligase BshC of Bacillus thuringiensis (strain Al Hakam).